The sequence spans 472 residues: Carboxypeptidase Q (472 aa).

The signal sequence occupies residues 1-20 (MKFLLFMFVGVVHLLPLASG). Positions 21–44 (KAIYGNGPSQRTFQEIKEEIAHYG) are excised as a propeptide. Asparagine 52, asparagine 61, and asparagine 179 each carry an N-linked (GlcNAc...) asparagine glycan. Zn(2+)-binding residues include histidine 290 and aspartate 302. Residue glutamate 336 is the Nucleophile of the active site. Glutamate 337 contributes to the Zn(2+) binding site. N-linked (GlcNAc...) asparagine glycosylation is found at asparagine 353 and asparagine 356. Aspartate 364 lines the Zn(2+) pocket. Residue asparagine 396 is glycosylated (N-linked (GlcNAc...) asparagine). Histidine 434 contributes to the Zn(2+) binding site.

The protein belongs to the peptidase M28 family. In terms of assembly, homodimer. The monomeric form is inactive while the homodimer is active. Post-translationally, N-glycosylated. The secreted form is modified by hybrid or complex type oligosaccharide chains.

The protein localises to the endoplasmic reticulum. It is found in the golgi apparatus. The protein resides in the lysosome. It localises to the secreted. Carboxypeptidase that may play an important role in the hydrolysis of circulating peptides. Catalyzes the hydrolysis of dipeptides with unsubstituted terminals into amino acids. May play a role in the liberation of thyroxine hormone from its thyroglobulin (Tg) precursor. The sequence is that of Carboxypeptidase Q (CPQ) from Bos taurus (Bovine).